Here is a 483-residue protein sequence, read N- to C-terminus: E3 ubiquitin-protein ligase TRIM50 (483 aa).

Residues 16–57 (CPICLEVFKEPLMLQCGHSYCKNCLDSLSEHLDSELRCPVCR) form an RING-type zinc finger. Residues 84–125 (TEPTVCVHHRNPLSLFCEKDQEFICGLCGLLGSHQHHRVTPV) form a B box-type zinc finger. Residues Cys89, His92, Cys111, and His117 each coordinate Zn(2+). 2 coiled-coil regions span residues 127 to 169 (TVYS…NESD) and 203 to 236 (GLVASLDMQLEQAQGTQERLAQAERVLEQFGNES). The B30.2/SPRY domain maps to 275–474 (DIKLTVWKRL…LPMVLPPPSA (200 aa)). Lys372 carries the N6-acetyllysine modification.

It belongs to the TRIM/RBCC family. As to quaternary structure, can form dimers and trimers. Interacts with several E2 ubiquitin-conjugating enzymes, including UBE2L6, UBE2E1, UBE2E3. No interaction with UBE2H. Interacts with BECN1. Interacts with SQSTM1. Interacts with NLRP3. In terms of processing, auto-ubiquitinated. Acetylated by EP300 and KAT2B. HDAC6 drives TRIM50 deacetylation. Acetylation antagonizes with TRIM50 ubiquitination.

The protein resides in the cytoplasm. The enzyme catalyses S-ubiquitinyl-[E2 ubiquitin-conjugating enzyme]-L-cysteine + [acceptor protein]-L-lysine = [E2 ubiquitin-conjugating enzyme]-L-cysteine + N(6)-ubiquitinyl-[acceptor protein]-L-lysine.. E3 ubiquitin-protein ligase that ubiquitinates Beclin-1/BECN1 in a 'Lys-63'-dependent manner enhancing its binding to ULK1. In turn, promotes starvation-induced autophagy activation. Also interacts with p62/SQSTM1 protein and thereby induces the formation and the autophagy clearance of aggresome-associated polyubiquitinated proteins through HDAC6 interaction. Also promotes NLRP3 inflammasome activation by directly inducing NLRP3 oligomerization independent of its E3 ligase function. The polypeptide is E3 ubiquitin-protein ligase TRIM50 (Trim50) (Rattus norvegicus (Rat)).